The primary structure comprises 283 residues: Nucleotide-binding protein Sama_3091 (283 aa).

8–15 (GRSGSGKS) provides a ligand contact to ATP. 56-59 (DIRN) is a binding site for GTP.

This sequence belongs to the RapZ-like family.

Its function is as follows. Displays ATPase and GTPase activities. This Shewanella amazonensis (strain ATCC BAA-1098 / SB2B) protein is Nucleotide-binding protein Sama_3091.